Here is a 192-residue protein sequence, read N- to C-terminus: 3-hydroxyanthranilate 3,4-dioxygenase 1 (192 aa).

R50 contacts O2. Residues H54, E60, and H102 each coordinate Fe cation. E60 contacts substrate. Residues R106 and E116 each contribute to the substrate site. Residues C131, C134, C168, and C171 each contribute to the a divalent metal cation site.

It belongs to the 3-HAO family. It depends on Fe(2+) as a cofactor.

It is found in the cytoplasm. It catalyses the reaction 3-hydroxyanthranilate + O2 = (2Z,4Z)-2-amino-3-carboxymuconate 6-semialdehyde. It participates in cofactor biosynthesis; NAD(+) biosynthesis; quinolinate from L-kynurenine: step 3/3. Its function is as follows. Catalyzes the oxidative ring opening of 3-hydroxyanthranilate to 2-amino-3-carboxymuconate semialdehyde, which spontaneously cyclizes to quinolinate. In Aspergillus clavatus (strain ATCC 1007 / CBS 513.65 / DSM 816 / NCTC 3887 / NRRL 1 / QM 1276 / 107), this protein is 3-hydroxyanthranilate 3,4-dioxygenase 1 (bna1-1).